The primary structure comprises 257 residues: Urease accessory protein UreD (257 aa).

It belongs to the UreD family. In terms of assembly, ureD, UreF and UreG form a complex that acts as a GTP-hydrolysis-dependent molecular chaperone, activating the urease apoprotein by helping to assemble the nickel containing metallocenter of UreC. The UreE protein probably delivers the nickel.

Its subcellular location is the cytoplasm. Its function is as follows. Required for maturation of urease via the functional incorporation of the urease nickel metallocenter. The chain is Urease accessory protein UreD from Sporosarcina pasteurii (Bacillus pasteurii).